The sequence spans 547 residues: Chaperonin GroEL (547 aa).

ATP-binding positions include 30 to 33 (TLGP), Lys-51, 87 to 91 (DGTTT), Gly-415, and Asp-496. The interval 527 to 547 (SDKEEPMPMRGGMGGMGGMDF) is disordered. Gly residues predominate over residues 537-547 (GGMGGMGGMDF).

The protein belongs to the chaperonin (HSP60) family. Forms a cylinder of 14 subunits composed of two heptameric rings stacked back-to-back. Interacts with the co-chaperonin GroES.

It is found in the cytoplasm. The enzyme catalyses ATP + H2O + a folded polypeptide = ADP + phosphate + an unfolded polypeptide.. Functionally, together with its co-chaperonin GroES, plays an essential role in assisting protein folding. The GroEL-GroES system forms a nano-cage that allows encapsulation of the non-native substrate proteins and provides a physical environment optimized to promote and accelerate protein folding. This Rickettsia massiliae (strain Mtu5) protein is Chaperonin GroEL.